A 104-amino-acid polypeptide reads, in one-letter code: Large ribosomal subunit protein uL24 (104 aa).

It belongs to the universal ribosomal protein uL24 family. As to quaternary structure, part of the 50S ribosomal subunit.

Functionally, one of two assembly initiator proteins, it binds directly to the 5'-end of the 23S rRNA, where it nucleates assembly of the 50S subunit. Its function is as follows. One of the proteins that surrounds the polypeptide exit tunnel on the outside of the subunit. This Aliivibrio fischeri (strain ATCC 700601 / ES114) (Vibrio fischeri) protein is Large ribosomal subunit protein uL24.